The primary structure comprises 400 residues: Plasminogen activator inhibitor 1 (400 aa).

Residues 1–21 (MQMSTVCLALGLALVFGEASA) form the signal peptide. N-linked (GlcNAc...) asparagine glycans are attached at residues Asn230, Asn286, and Asn350.

This sequence belongs to the serpin family. As to quaternary structure, forms a heterodimer with TMPRSS7. Interacts with VTN. Binds LRP1B; binding is followed by internalization and degradation. Interacts with PPP1CB. In complex with PLAU/uPA, interacts with PLAUR/uPAR. Interacts with SORL1 and LRP1, either alone or in complex with PLAU; these interactions are abolished in the presence of LRPAP1/RAP. The ternary complex composed of PLAUR-PLAU-PAI1 also interacts with SORL1. Interacts with PLAT/tPA. Also interacts with SORL1, when complexed to PLAT/tPA.

It is found in the secreted. Serine protease inhibitor. Inhibits TMPRSS7. Is a primary inhibitor of tissue-type plasminogen activator (PLAT) and urokinase-type plasminogen activator (PLAU). As PLAT inhibitor, it is required for fibrinolysis down-regulation and is responsible for the controlled degradation of blood clots. As PLAU inhibitor, it is involved in the regulation of cell adhesion and spreading. Acts as a regulator of cell migration, independently of its role as protease inhibitor. It is required for stimulation of keratinocyte migration during cutaneous injury repair. It is involved in cellular and replicative senescence. Plays a role in alveolar type 2 cells senescence in the lung. Is involved in the regulation of cementogenic differentiation of periodontal ligament stem cells, and regulates odontoblast differentiation and dentin formation during odontogenesis. The polypeptide is Plasminogen activator inhibitor 1 (SERPINE1) (Neovison vison (American mink)).